The sequence spans 471 residues: Ribulose bisphosphate carboxylase large chain (471 aa).

A propeptide spanning residues 1–2 (MS) is cleaved from the precursor. The residue at position 3 (proline 3) is an N-acetylproline. Lysine 14 carries the post-translational modification N6,N6,N6-trimethyllysine. Positions 123 and 173 each coordinate substrate. Lysine 175 (proton acceptor) is an active-site residue. Lysine 177 is a substrate binding site. Mg(2+)-binding residues include lysine 201, aspartate 203, and glutamate 204. Lysine 201 is subject to N6-carboxylysine. Histidine 294 acts as the Proton acceptor in catalysis. 3 residues coordinate substrate: arginine 295, histidine 327, and serine 379.

Belongs to the RuBisCO large chain family. Type I subfamily. In terms of assembly, heterohexadecamer of 8 large chains and 8 small chains; disulfide-linked. The disulfide link is formed within the large subunit homodimers. It depends on Mg(2+) as a cofactor. The disulfide bond which can form in the large chain dimeric partners within the hexadecamer appears to be associated with oxidative stress and protein turnover.

Its subcellular location is the plastid. The protein resides in the chloroplast. It catalyses the reaction 2 (2R)-3-phosphoglycerate + 2 H(+) = D-ribulose 1,5-bisphosphate + CO2 + H2O. The enzyme catalyses D-ribulose 1,5-bisphosphate + O2 = 2-phosphoglycolate + (2R)-3-phosphoglycerate + 2 H(+). Its function is as follows. RuBisCO catalyzes two reactions: the carboxylation of D-ribulose 1,5-bisphosphate, the primary event in carbon dioxide fixation, as well as the oxidative fragmentation of the pentose substrate in the photorespiration process. Both reactions occur simultaneously and in competition at the same active site. This is Ribulose bisphosphate carboxylase large chain from Drymophloeus subdistichus (Palm tree).